The following is a 306-amino-acid chain: MTTIFHADDLLHALQQAKTEKNFSSVFSLDWDKLRIAKRNTSVKYVTVHVMVKGKKAPLMFNFQNEKHVGTISPSTDEEVIRMNAENPKFLVKKRDRDPCLQFNKYKISPPLEDDGFTVKKNEQGEEIYPGDEEKSKLFQIIELLEEAFEDAVQKGPENMKTKNIIKLVQRKISSNAAKNADKSLPNPIARIRIKVNPITNMLAPVLLDKSKPITLQNGKTSFEELKDKDGVKANPDNIHKLIESHSIHDGIINARSICISSMGISFPLCLEMGVVKVFEKNNGIDVDSIYGPDEITNLINQVTIA.

It belongs to the asfivirus CP312R family.

Its subcellular location is the virion. This is an uncharacterized protein from African swine fever virus (isolate Pig/Kenya/KEN-50/1950) (ASFV).